The chain runs to 702 residues: Ribosomal RNA large subunit methyltransferase K/L (702 aa).

The THUMP domain occupies 43-154 (LVYQSLMWSR…KETASIALDL (112 aa)).

The protein belongs to the methyltransferase superfamily. RlmKL family.

It localises to the cytoplasm. The catalysed reaction is guanosine(2445) in 23S rRNA + S-adenosyl-L-methionine = N(2)-methylguanosine(2445) in 23S rRNA + S-adenosyl-L-homocysteine + H(+). The enzyme catalyses guanosine(2069) in 23S rRNA + S-adenosyl-L-methionine = N(2)-methylguanosine(2069) in 23S rRNA + S-adenosyl-L-homocysteine + H(+). Its function is as follows. Specifically methylates the guanine in position 2445 (m2G2445) and the guanine in position 2069 (m7G2069) of 23S rRNA. The sequence is that of Ribosomal RNA large subunit methyltransferase K/L from Shigella boydii serotype 18 (strain CDC 3083-94 / BS512).